A 488-amino-acid chain; its full sequence is Glutamyl-tRNA(Gln) amidotransferase subunit A (488 aa).

Residues lysine 77 and serine 152 each act as charge relay system in the active site. The active-site Acyl-ester intermediate is the serine 176.

It belongs to the amidase family. GatA subfamily. In terms of assembly, heterotrimer of A, B and C subunits.

The catalysed reaction is L-glutamyl-tRNA(Gln) + L-glutamine + ATP + H2O = L-glutaminyl-tRNA(Gln) + L-glutamate + ADP + phosphate + H(+). In terms of biological role, allows the formation of correctly charged Gln-tRNA(Gln) through the transamidation of misacylated Glu-tRNA(Gln) in organisms which lack glutaminyl-tRNA synthetase. The reaction takes place in the presence of glutamine and ATP through an activated gamma-phospho-Glu-tRNA(Gln). The chain is Glutamyl-tRNA(Gln) amidotransferase subunit A from Streptococcus pneumoniae (strain JJA).